A 247-amino-acid chain; its full sequence is Enolase-phosphatase E1 (247 aa).

This sequence belongs to the HAD-like hydrolase superfamily. MasA/MtnC family. In terms of assembly, monomer. Requires Mg(2+) as cofactor.

It catalyses the reaction 5-methylsulfanyl-2,3-dioxopentyl phosphate + H2O = 1,2-dihydroxy-5-(methylsulfanyl)pent-1-en-3-one + phosphate. It functions in the pathway amino-acid biosynthesis; L-methionine biosynthesis via salvage pathway; L-methionine from S-methyl-5-thio-alpha-D-ribose 1-phosphate: step 3/6. It participates in amino-acid biosynthesis; L-methionine biosynthesis via salvage pathway; L-methionine from S-methyl-5-thio-alpha-D-ribose 1-phosphate: step 4/6. Bifunctional enzyme that catalyzes the enolization of 2,3-diketo-5-methylthiopentyl-1-phosphate (DK-MTP-1-P) into the intermediate 2-hydroxy-3-keto-5-methylthiopentenyl-1-phosphate (HK-MTPenyl-1-P), which is then dephosphorylated to form the acireductone 1,2-dihydroxy-3-keto-5-methylthiopentene (DHK-MTPene). The protein is Enolase-phosphatase E1 of Leptospira biflexa serovar Patoc (strain Patoc 1 / Ames).